The chain runs to 105 residues: Large ribosomal subunit protein eL36 (105 aa).

The tract at residues 86-105 is disordered; that stretch reads QAGKKKRDDIANINRKASAK.

The protein belongs to the eukaryotic ribosomal protein eL36 family.

This is Large ribosomal subunit protein eL36 (rpl36) from Dictyostelium discoideum (Social amoeba).